Reading from the N-terminus, the 855-residue chain is Mitofusin FZO1 (855 aa).

Positions 1–19 (MSEGKQQFKDSNKPHKDST) are enriched in basic and acidic residues. The tract at residues 1–27 (MSEGKQQFKDSNKPHKDSTDQDDDAAT) is disordered. At 1 to 705 (MSEGKQQFKD…PSLLFTSKIP (705 aa)) the chain is on the cytoplasmic side. Residues 91–190 (NYNNNRVLLK…KRVDDVSSKV (100 aa)) are HRN. The 284-residue stretch at 184–467 (DDVSSKVFIT…KKRSLSKLLP (284 aa)) folds into the Dynamin-type G domain. Residues 197-202 (NTGKSA) and 370-373 (KKFD) contribute to the GTP site. Lys398 participates in a covalent cross-link: Glycyl lysine isopeptide (Lys-Gly) (interchain with G-Cter in ubiquitin). Ser408 is a GTP binding site. Residues 413 to 433 (ELPHYHNENDNEDHGDRKPDD) show a composition bias toward basic and acidic residues. The interval 413–447 (ELPHYHNENDNEDHGDRKPDDDPYSSSDPDPDFDS) is disordered. A Glycyl lysine isopeptide (Lys-Gly) (interchain with G-Cter in ubiquitin) cross-link involves residue Lys464. The tract at residues 484–547 (KSNMKMYSEE…KEALLNALDV (64 aa)) is HR1. Positions 630-843 (GKRLKVSLSI…QSLYEGTVAQ (214 aa)) are required for interaction with UGO1. The helical transmembrane segment at 706-726 (TLTLYFLGSTKVVGNIILNGI) threads the bilayer. At 727-736 (KLSSWSSLKK) the chain is on the mitochondrial intermembrane side. The helical transmembrane segment at 737-757 (LSVPVIVVGSLLGLTYLIHDL) threads the bilayer. The Cytoplasmic portion of the chain corresponds to 758–855 (PRALPMNLSI…MVEEINLDID (98 aa)). The interval 769–831 (YKRKLQELDY…KKESNLLSIK (63 aa)) is HR2. A coiled-coil region spans residues 798 to 825 (TREILRSCEIIMDKKQITKKELENKKES).

The protein belongs to the TRAFAC class dynamin-like GTPase superfamily. Dynamin/Fzo/YdjA family. Mitofusin subfamily. Homodimer. Dimerization depends on GTP binding. Component of a large multiprotein complex of 800 kDa. Binds the cytoplasmic domain of UGO1 which binds MGM1 through its intermembrane space domain. Interacts with MDM30. Interacts with UBP2 and UBP12. Interacts (when ubiquitinated) with DOA1; the interaction recruits FZO1 to CDC48 and promotes FZO1 proteasomal degradation. Post-translationally, ubiquitinated at Lys-398 and Lys-464. MDM30 and UGO1 are involved in ubiquitination. Deubiquitinated by UBP2 and UBP12. UBP2 and UBP12 recognize distinct ubiquitin chains on FZO1 that have opposing effects on mitochondrial fusion. UBP2 removes ubiquitin chains that initiate proteolysis of FZO1 and inhibit fusion. UBP12 recognizes ubiquitin chains that stabilize FZO1 and promote mitochondrial fusion. UBP12 deubiquitylates FZO1 only after oligomerization.

Its subcellular location is the mitochondrion outer membrane. It carries out the reaction GTP + H2O = GDP + phosphate + H(+). Essential transmembrane GTPase, which mediates mitochondrial fusion. Fusion proceeds through several steps; first mitochondria are tethered together, then brought into close contact, followed by the formation of a docking ring around contact areas, and finally membrane fusion. Fusion of mitochondria occurs in many cell types and constitutes an important step in mitochondrial morphology, which is balanced between fusion and fission, mediated by FZO1 and DNM1, respectively. Functions antagonistically with DNM1. Probably acts by forming membrane contact sites that mediate mitochondrial membrane fusion. Mitochondrial docking and fusion requires GTP hydrolysis. Mitochondrial fusion also promotes increased lifespan. The chain is Mitofusin FZO1 (FZO1) from Saccharomyces cerevisiae (strain ATCC 204508 / S288c) (Baker's yeast).